The chain runs to 153 residues: SsrA-binding protein (153 aa).

It belongs to the SmpB family.

It is found in the cytoplasm. Its function is as follows. Required for rescue of stalled ribosomes mediated by trans-translation. Binds to transfer-messenger RNA (tmRNA), required for stable association of tmRNA with ribosomes. tmRNA and SmpB together mimic tRNA shape, replacing the anticodon stem-loop with SmpB. tmRNA is encoded by the ssrA gene; the 2 termini fold to resemble tRNA(Ala) and it encodes a 'tag peptide', a short internal open reading frame. During trans-translation Ala-aminoacylated tmRNA acts like a tRNA, entering the A-site of stalled ribosomes, displacing the stalled mRNA. The ribosome then switches to translate the ORF on the tmRNA; the nascent peptide is terminated with the 'tag peptide' encoded by the tmRNA and targeted for degradation. The ribosome is freed to recommence translation, which seems to be the essential function of trans-translation. The chain is SsrA-binding protein from Cytophaga hutchinsonii (strain ATCC 33406 / DSM 1761 / CIP 103989 / NBRC 15051 / NCIMB 9469 / D465).